An 82-amino-acid polypeptide reads, in one-letter code: ATP synthase subunit c (82 aa).

Helical transmembrane passes span 5 to 25 and 57 to 77; these read IASASVLAAALAIGLAAIGPG and LAFMESLTIYGLVIALVLLFA.

It belongs to the ATPase C chain family. F-type ATPases have 2 components, F(1) - the catalytic core - and F(0) - the membrane proton channel. F(1) has five subunits: alpha(3), beta(3), gamma(1), delta(1), epsilon(1). F(0) has four main subunits: a(1), b(1), b'(1) and c(10-14). The alpha and beta chains form an alternating ring which encloses part of the gamma chain. F(1) is attached to F(0) by a central stalk formed by the gamma and epsilon chains, while a peripheral stalk is formed by the delta, b and b' chains.

It localises to the cellular thylakoid membrane. Its function is as follows. F(1)F(0) ATP synthase produces ATP from ADP in the presence of a proton or sodium gradient. F-type ATPases consist of two structural domains, F(1) containing the extramembraneous catalytic core and F(0) containing the membrane proton channel, linked together by a central stalk and a peripheral stalk. During catalysis, ATP synthesis in the catalytic domain of F(1) is coupled via a rotary mechanism of the central stalk subunits to proton translocation. Key component of the F(0) channel; it plays a direct role in translocation across the membrane. A homomeric c-ring of between 10-14 subunits forms the central stalk rotor element with the F(1) delta and epsilon subunits. The polypeptide is ATP synthase subunit c (Cyanothece sp. (strain PCC 7425 / ATCC 29141)).